A 547-amino-acid polypeptide reads, in one-letter code: ATP synthase subunit alpha (547 aa).

An ATP-binding site is contributed by 172–179 (GDRKTGKT).

This sequence belongs to the ATPase alpha/beta chains family. In terms of assembly, F-type ATPases have 2 components, CF(1) - the catalytic core - and CF(0) - the membrane proton channel. CF(1) has five subunits: alpha(3), beta(3), gamma(1), delta(1), epsilon(1). CF(0) has three main subunits: a(1), b(2) and c(9-12). The alpha and beta chains form an alternating ring which encloses part of the gamma chain. CF(1) is attached to CF(0) by a central stalk formed by the gamma and epsilon chains, while a peripheral stalk is formed by the delta and b chains.

Its subcellular location is the cell membrane. It catalyses the reaction ATP + H2O + 4 H(+)(in) = ADP + phosphate + 5 H(+)(out). Its function is as follows. Produces ATP from ADP in the presence of a proton gradient across the membrane. The alpha chain is a regulatory subunit. The chain is ATP synthase subunit alpha from Rhodococcus opacus (strain B4).